We begin with the raw amino-acid sequence, 177 residues long: Nucleoside triphosphate/diphosphate phosphatase (177 aa).

Arginine 23 functions as the Proton donor in the catalytic mechanism. Asparagine 87, aspartate 103, aspartate 105, aspartate 107, aspartate 120, and glutamate 123 together coordinate Mg(2+).

This sequence belongs to the Ntdp family. Mg(2+) serves as cofactor.

It catalyses the reaction a ribonucleoside 5'-triphosphate + H2O = a ribonucleoside 5'-diphosphate + phosphate + H(+). The catalysed reaction is a ribonucleoside 5'-diphosphate + H2O = a ribonucleoside 5'-phosphate + phosphate + H(+). Functionally, has nucleoside phosphatase activity towards nucleoside triphosphates and nucleoside diphosphates. The protein is Nucleoside triphosphate/diphosphate phosphatase of Streptococcus thermophilus (strain CNRZ 1066).